A 598-amino-acid polypeptide reads, in one-letter code: DNA (cytosine-5)-methyltransferase DRM2 (598 aa).

2 disordered regions span residues 1–49 (MVDW…NGKA) and 114–146 (EVDE…GDED). Positions 42 to 91 (PQDANGKANGSGALVAEFMGMGFPKEMILKAIKEIGDTDTEQLLELLLTY) constitute a UBA 1 domain. The segment covering 114–128 (EVDEEEDDTNWDEYD) has biased composition (acidic residues). The UBA 2 domain maps to 150 to 194 (EMSEKDEKMKSLVNMGFPEDEAKMAIDRCGLDAPVAVLVDSIYAS). The segment at 227 to 252 (GSKKRKRYGSGPSGNQVPFDGSHEEP) is disordered. In terms of domain architecture, SAM-dependent MTase DRM-type spans 272–598 (VHRNLPDQAL…EHVKATMSAV (327 aa)).

The protein belongs to the class I-like SAM-binding methyltransferase superfamily. DRM-methyltransferase family. As to quaternary structure, interacts (via UBA domains) with EIF4A.

The protein localises to the nucleus. It catalyses the reaction a 2'-deoxycytidine in DNA + S-adenosyl-L-methionine = a 5-methyl-2'-deoxycytidine in DNA + S-adenosyl-L-homocysteine + H(+). Its function is as follows. Involved in de novo DNA methylation. Required for CpG and non-CpG methylation. Required for normal establishment and maintenance of RNA-directed DNA methylation (RdDM) mediated by small interfering RNAs (siRNAs). Regulates proper plant development in both vegetative and reproductive stages through DNA methylation. This chain is DNA (cytosine-5)-methyltransferase DRM2, found in Oryza sativa subsp. japonica (Rice).